Here is an 87-residue protein sequence, read N- to C-terminus: Small ribosomal subunit protein bS20 (87 aa).

Residues 1–26 (MANIKSAKKRAVQSEKRRKHNASRRS) are disordered.

This sequence belongs to the bacterial ribosomal protein bS20 family.

Its function is as follows. Binds directly to 16S ribosomal RNA. The sequence is that of Small ribosomal subunit protein bS20 from Yersinia enterocolitica serotype O:8 / biotype 1B (strain NCTC 13174 / 8081).